Consider the following 109-residue polypeptide: uncharacterized protein (109 aa).

A helical transmembrane segment spans residues 63 to 85 (LFVKTFFACTYIIMLAFQVYIFL).

It is found in the membrane. This is an uncharacterized protein from Saccharomyces cerevisiae (strain ATCC 204508 / S288c) (Baker's yeast).